Consider the following 95-residue polypeptide: DNA-binding protein CENSYa_1764 (95 aa).

A disordered region spans residues 1-21 (MSYTDPDDSLPEHVPGEAEMS).

Belongs to the PDCD5 family.

In Cenarchaeum symbiosum (strain A), this protein is DNA-binding protein CENSYa_1764.